A 141-amino-acid chain; its full sequence is Small ribosomal subunit protein uS8 (141 aa).

It belongs to the universal ribosomal protein uS8 family. Part of the 30S ribosomal subunit. Contacts proteins S5 and S12.

Functionally, one of the primary rRNA binding proteins, it binds directly to 16S rRNA central domain where it helps coordinate assembly of the platform of the 30S subunit. The sequence is that of Small ribosomal subunit protein uS8 from Mycoplasma genitalium (strain ATCC 33530 / DSM 19775 / NCTC 10195 / G37) (Mycoplasmoides genitalium).